Consider the following 183-residue polypeptide: MDIDPYKEFGASVELLSFLPSDFFPNIRDLLDTASALYREALESPEHCSPHHTALRQAILCWGELMNLATWVGSNLEDPASRELVVSYVNVNMGLKIRQLLWFHISCLTFGRETVLEYLVSFGVWIRTPIAYRPPNAPILSTLPETTVVRRRGRSPRRRTPSPRRRRSQSPRRRRSQSRESQC.

The tract at residues leucine 143–cysteine 183 is disordered. Basic residues predominate over residues valine 149 to serine 176. A phosphoserine; by host mark is found at serine 155, serine 162, and serine 170. The stretch at serine 155–proline 161 is one 1; half-length repeat. Residues serine 155–glutamine 177 are 3 X 8 AA repeats of S-P-R-R-R-[PR]-S-Q. The Bipartite nuclear localization signal signature appears at arginine 158–arginine 175. 2 consecutive repeat copies span residues serine 162–glutamine 169 and serine 170–glutamine 177. Residues glutamine 177–cysteine 183 are RNA binding.

This sequence belongs to the orthohepadnavirus core antigen family. In terms of assembly, homodimerizes, then multimerizes. Interacts with cytosol exposed regions of viral L glycoprotein present in the reticulum-to-Golgi compartment. Interacts with human FLNB. Phosphorylated form interacts with host importin alpha; this interaction depends on the exposure of the NLS, which itself depends upon genome maturation and/or phosphorylation of the capsid protein. Interacts with host NUP153. Post-translationally, phosphorylated by host SRPK1, SRPK2, and maybe protein kinase C or GAPDH. Phosphorylation is critical for pregenomic RNA packaging. Protein kinase C phosphorylation is stimulated by HBx protein and may play a role in transport of the viral genome to the nucleus at the late step during the viral replication cycle.

The protein localises to the virion. The protein resides in the host cytoplasm. Its function is as follows. Self assembles to form an icosahedral capsid. Most capsids appear to be large particles with an icosahedral symmetry of T=4 and consist of 240 copies of capsid protein, though a fraction forms smaller T=3 particles consisting of 180 capsid proteins. Entering capsids are transported along microtubules to the nucleus. Phosphorylation of the capsid is thought to induce exposure of nuclear localization signal in the C-terminal portion of the capsid protein that allows binding to the nuclear pore complex via the importin (karyopherin-) alpha and beta. Capsids are imported in intact form through the nuclear pore into the nuclear basket, where it probably binds NUP153. Only capsids that contain the mature viral genome can release the viral DNA and capsid protein into the nucleoplasm. Immature capsids get stuck in the basket. Capsids encapsulate the pre-genomic RNA and the P protein. Pre-genomic RNA is reverse-transcribed into DNA while the capsid is still in the cytoplasm. The capsid can then either be directed to the nucleus, providing more genomes for transcription, or bud through the endoplasmic reticulum to provide new virions. This Homo sapiens (Human) protein is Capsid protein.